Consider the following 137-residue polypeptide: Large ribosomal subunit protein bL17 (137 aa).

Belongs to the bacterial ribosomal protein bL17 family. Part of the 50S ribosomal subunit. Contacts protein L32.

The protein is Large ribosomal subunit protein bL17 of Bradyrhizobium sp. (strain ORS 278).